The following is a 130-amino-acid chain: MYSFEQAITQLFQQLSLSIPDTIEPVIGVKVGEFACHITEHPVGQILMFTLPSLDNNNEKETLLSHNIFSQDILKPILSWDEVGGHPVLWNRQPLNNLDNNSLYTQLEMLVQGAERLQTSSLISPPRSFS.

In terms of biological role, positive regulator of YopE. This is YopE regulator (yerA) from Yersinia enterocolitica serotype O:8 / biotype 1B (strain NCTC 13174 / 8081).